The sequence spans 151 residues: Caveolin-3 (151 aa).

Over 1–83 (MMTEEHTDLE…RLLSTLLGVP (83 aa)) the chain is Cytoplasmic. Lys38 participates in a covalent cross-link: Glycyl lysine isopeptide (Lys-Gly) (interchain with G-Cter in SUMO3). The segment at 64–114 (TFTVSKYWCYRLLSTLLGVPLALLWGFLFACISFCHIWAVVPCIKSYLIEI) is required for interaction with DAG1. The helical intramembrane region spans 84 to 104 (LALLWGFLFACISFCHIWAVV). Topologically, residues 105-151 (PCIKSYLIEIQCISHIYSLCIRTFCNPLFAALGQVCSNIKVVLRREG) are cytoplasmic.

The protein belongs to the caveolin family. Homooligomer. Interacts with DYSF. Interacts with DLG1 and KCNA5; forms a ternary complex. Interacts with DAG1 (via its C-terminal); the interaction prevents binding of DAG1 with DMD. Interacts with TRIM72. Interacts with MUSK; may regulate MUSK signaling. Interacts with POPDC1. Interacts with CAVIN1, CAVIN2 and CAVIN4. Post-translationally, sumoylation with SUMO3 by PIAS4 may reduce agonist-induced internalization and desensitization of adrenergic receptor ABRD2. As to expression, expressed predominantly in muscle.

The protein resides in the golgi apparatus membrane. It is found in the cell membrane. The protein localises to the membrane. Its subcellular location is the caveola. It localises to the sarcolemma. In terms of biological role, may act as a scaffolding protein within caveolar membranes. Interacts directly with G-protein alpha subunits and can functionally regulate their activity. May also regulate voltage-gated potassium channels. Plays a role in the sarcolemma repair mechanism of both skeletal muscle and cardiomyocytes that permits rapid resealing of membranes disrupted by mechanical stress. Mediates the recruitment of CAVIN2 and CAVIN3 proteins to the caveolae. In Mus musculus (Mouse), this protein is Caveolin-3.